The primary structure comprises 160 residues: Transcriptional repressor NrdR (160 aa).

Residues Met1–Thr11 are compositionally biased toward polar residues. A disordered region spans residues Met1–Glu20. A zinc finger spans residues Cys3 to Cys34. The ATP-cone domain maps to Leu49–Asp139.

Belongs to the NrdR family. It depends on Zn(2+) as a cofactor.

In terms of biological role, negatively regulates transcription of bacterial ribonucleotide reductase nrd genes and operons by binding to NrdR-boxes. In Nitrobacter winogradskyi (strain ATCC 25391 / DSM 10237 / CIP 104748 / NCIMB 11846 / Nb-255), this protein is Transcriptional repressor NrdR.